Reading from the N-terminus, the 309-residue chain is Porphobilinogen deaminase (309 aa).

Cysteine 244 is modified (S-(dipyrrolylmethanemethyl)cysteine).

Belongs to the HMBS family. In terms of assembly, monomer. It depends on dipyrromethane as a cofactor.

The catalysed reaction is 4 porphobilinogen + H2O = hydroxymethylbilane + 4 NH4(+). Its pathway is porphyrin-containing compound metabolism; protoporphyrin-IX biosynthesis; coproporphyrinogen-III from 5-aminolevulinate: step 2/4. Its function is as follows. Tetrapolymerization of the monopyrrole PBG into the hydroxymethylbilane pre-uroporphyrinogen in several discrete steps. In Listeria innocua serovar 6a (strain ATCC BAA-680 / CLIP 11262), this protein is Porphobilinogen deaminase.